Reading from the N-terminus, the 592-residue chain is LIM domain-binding protein 1 (592 aa).

Disordered regions lie at residues 14–41 (GHPPPFAGPESSNSHYGMPPSQGTNSQN) and 305–368 (PAPE…NPMT). Residues 23–41 (ESSNSHYGMPPSQGTNSQN) are compositionally biased toward polar residues. A compositionally biased stretch (low complexity) spans 322 to 344 (PAANPRGSKKATAAAAAAAAAAT). The segment covering 352–368 (PTASPANNQQFPPNPMT) has biased composition (polar residues). The LIM interaction domain (LID) domain maps to 378–417 (DVMVVGEPSMMGSEFGENDERTISRVENSQYDPNAMQMQS). Disordered regions lie at residues 437-458 (HHPGMQPPPGQQHMPPHSMGSQ) and 559-592 (GGMQMNQMPPPNYSQYTGGPPPQWPPPNSAMITG). The span at 577–586 (GPPPQWPPPN) shows a compositional bias: pro residues.

The protein belongs to the LDB family. As to quaternary structure, interacts with blmp-1. In terms of tissue distribution, expressed in all neurons and some other tissues of the adult, including vulval muscle, and, in males, all the neurons of the tail region. Expressed in vulval cells.

In terms of biological role, binds to the LIM domain of LIM domain-containing transcription factors. Required for the blmp-1-mediated transcriptional activation or repression of several hypodermal genes, such as bed-3. Regulates sam-10 nuclear localization in PLM neurons. Has a role in synaptic differentiation of PLM mechanosensory neurons. Involved in gonadogenesis. This Caenorhabditis elegans protein is LIM domain-binding protein 1.